The sequence spans 280 residues: Elongation factor Ts (280 aa).

The segment at 82–85 (TDFV) is involved in Mg(2+) ion dislocation from EF-Tu.

Belongs to the EF-Ts family.

The protein localises to the cytoplasm. Functionally, associates with the EF-Tu.GDP complex and induces the exchange of GDP to GTP. It remains bound to the aminoacyl-tRNA.EF-Tu.GTP complex up to the GTP hydrolysis stage on the ribosome. This chain is Elongation factor Ts, found in Baumannia cicadellinicola subsp. Homalodisca coagulata.